The primary structure comprises 208 residues: Mediator of RNA polymerase II transcription subunit 18 (208 aa).

The protein belongs to the Mediator complex subunit 18 family. As to quaternary structure, component of the Mediator complex.

The protein resides in the nucleus. Component of the Mediator complex, a coactivator involved in the regulated transcription of nearly all RNA polymerase II-dependent genes. Mediator functions as a bridge to convey information from gene-specific regulatory proteins to the basal RNA polymerase II transcription machinery. Mediator is recruited to promoters by direct interactions with regulatory proteins and serves as a scaffold for the assembly of a functional preinitiation complex with RNA polymerase II and the general transcription factors. In Danio rerio (Zebrafish), this protein is Mediator of RNA polymerase II transcription subunit 18 (med18).